The chain runs to 201 residues: Recombination protein RecR (201 aa).

The C4-type zinc-finger motif lies at 60 to 75 (CKKCFNLTSEDECEIC). The 95-residue stretch at 83–177 (KLICVVAETK…KVTRIAYGLP (95 aa)) folds into the Toprim domain.

It belongs to the RecR family.

May play a role in DNA repair. It seems to be involved in an RecBC-independent recombinational process of DNA repair. It may act with RecF and RecO. The protein is Recombination protein RecR of Prochlorococcus marinus (strain MIT 9215).